The primary structure comprises 239 residues: Large ribosomal subunit protein uL2 (239 aa).

Residues 203 to 239 form a disordered region; the sequence is PFGGKEHHPGKPTTTSRRAPPGRKVGHIAARRTGRRK. Basic residues predominate over residues 222 to 239; it reads PPGRKVGHIAARRTGRRK.

Belongs to the universal ribosomal protein uL2 family. In terms of assembly, part of the 50S ribosomal subunit. Forms a bridge to the 30S subunit in the 70S ribosome.

Functionally, one of the primary rRNA binding proteins. Required for association of the 30S and 50S subunits to form the 70S ribosome, for tRNA binding and peptide bond formation. It has been suggested to have peptidyltransferase activity; this is somewhat controversial. Makes several contacts with the 16S rRNA in the 70S ribosome. The chain is Large ribosomal subunit protein uL2 from Pyrococcus abyssi (strain GE5 / Orsay).